Consider the following 652-residue polypeptide: MSRFNPSPVSLSVTLGLMFSASAFAQDATKTDETMVVTAAGYAQVIQNAPASISVISREDLESRYYRDVTDALKSVPGVTVTGGGDTTDISIRGMGSNYTLILVDGKRQTSRQTRPNSDGPGIEQGWLPPLQAIERIEVIRGPMSTLYGSDAIGGVINIITRKDQQQWSGNVQLSTVVQENRASGDEQSANFFVTGPLSDALSLQVYGQTTQRDEDEIEHGYGDKSLRSLTSKLNYQLNPDHQLQLEAGVSAQDRENNVGKSAQSSGCRGTCSNTDNQYRRNHVAVSHQGDWQDVGQSDTYLQYEENTNKSREMSIDNTVFKSTLVAPIGEHMLSFGVEGKHESLEDKTSNKISSRTHISNTQWAGFIEDEWALAEQFRLTFGGRLDHDKNYGSHFSPRVYGVWNLDPLWTVKGGVSTGFRAPQLREVTPDWGQVSGGGNIYGNPDLKPETSINKELSLMYSTGSGLAASLTAFHNDFKDKITRVACPANICTAGPNQWGAAPTYRVNIDEAETYGAEATLSLPITESVELSSSYTYTHSEQKSGNFAGRPLLQLPKHLFNANLSWQTTDRLNSWANLNYRGKEMQPEGGASNDDFIAPSYTFIDTGVTYALTDTATIKAAVYNLFDQEVNYAEYGYVEDGRRYWLGLDIAF.

A signal peptide spans 1–25 (MSRFNPSPVSLSVTLGLMFSASAFA). Positions 33–40 (ETMVVTAA) match the TonB box motif. One can recognise a TBDR plug domain in the interval 45 to 162 (VIQNAPASIS…IGGVINIITR (118 aa)). The TBDR beta-barrel domain maps to 167–652 (QWSGNVQLST…RYWLGLDIAF (486 aa)). A TonB C-terminal box motif is present at residues 635–652 (YGYVEDGRRYWLGLDIAF).

The protein belongs to the TonB-dependent receptor family.

It is found in the cell outer membrane. In terms of biological role, involved in the initial step of iron uptake by binding ferric vibriobactin, an iron chelatin siderophore that allows V.cholerae to extract iron from the environment. The polypeptide is Iron-regulated outer membrane virulence protein (irgA) (Vibrio cholerae serotype O1 (strain ATCC 39315 / El Tor Inaba N16961)).